The sequence spans 849 residues: MFDFSLEAIVYAKAISLLATVAVVMMWLFYYCYRLKQKNEVIFGTHHAAYIAYSVCIIAWISSNAYFHTDLLPELGASAGMFMAKFANLASFFAFAFAYYFSCQLAAEQRKGKVHRWQQGIFVSLTVYSLFINLRPGLTVEHVDIVGPSQFIIEFGPHTSYFFIGLVSFVVLTLVNLVAMRTNSSKLTLAKTNYMIAGILVFMLSTAVIHLGMTYFMGDFSLTWLPPALSISEMLFVGYALLTSRFYSVKYIAYLALSVLLVCAIFVLPLGAIFIPLTESNQWLIAIPICALIGITWQLLYKKTSRYASFLIYGDKKTPVQQILSLEEDFKLSIDDAMRRLGKLLQIPNDKLRLVTSNYNETFYEEYLSSNRSVLVFDELSEELEYKVSAKRSMKALYDKMSSNNTALVMPLFGQGKSVTHLLISPHKSNNQMFSNEEISAVQTLLTRVQSTIEADRRIRQSRALANSIAHEMRNPLAQVQLQFEALKQHIENHAPVEQITLDIENGQAAIQRGRQLIDIILREVSDSSPEHEPIAMTSIHKAVDQAVSHYGFENEKIIERIRLPQHTDFVAKLNETLFNFVIFNLIRNAIYYFDSYPDSQIEISTKTGPYENTLIFRDTGPGIDETISHKIFDDFFSYQKSGGSGLGLGYCQRVMRSFGGRIECKSKLGTFTEFHLYFPVVPNAPKADTLRTPYFNDWKQNKRSNEHKVAPNVQINNQSPTVLIVDDKEVQRALVQMYLNQLGVNSLQANNGENAVEVFKANHVDLILMDVQMPVMNGFDASQRIKELSPQTPIVALSGESGERELDMINKLMDGRLEKPTTLNALRHVLGNWLNKNTASSACEAERE.

A run of 7 helical transmembrane segments spans residues 9 to 29 (IVYA…MWLF), 41 to 61 (VIFG…IAWI), 160 to 180 (SYFF…LVAM), 196 to 216 (IAGI…MTYF), 220 to 242 (FSLT…YALL), 251 to 275 (YIAY…AIFI), and 283 to 301 (WLIA…QLLY). Residues 468–683 (SIAHEMRNPL…EFHLYFPVVP (216 aa)) enclose the Histidine kinase domain. H471 is modified (phosphohistidine; by autocatalysis). Residues 722–835 (TVLIVDDKEV…ALRHVLGNWL (114 aa)) enclose the Response regulatory domain. A 4-aspartylphosphate modification is found at D771.

It is found in the cell inner membrane. The catalysed reaction is ATP + protein L-histidine = ADP + protein N-phospho-L-histidine.. At low cell density, in the absence of AI-1 (autoinducer 1), LuxN has a kinase activity and autophosphorylates on His-471. The phosphoryl group is then transferred on Asp-771 of the response regulator domain. The phosphoryl group is transferred to LuxU, and ultimately to LuxO. At high cell density, in the presence of AI-1, the kinase activity is inactivated, and the response regulator domain has a phosphatase activity. LuxN phosphatase acts on itself. As LuxU could function to establish an equilibrium between the aspartyl-phosphate of LuxN and the aspartyl-phosphate of LuxO, LuxU transfers phosphate from LuxO to LuxN and finally phosphate is drained from the system. The polypeptide is Autoinducer 1 sensor kinase/phosphatase LuxN (luxN) (Vibrio harveyi (Beneckea harveyi)).